The chain runs to 530 residues: UDP-glucuronosyltransferase 1A10 (530 aa).

The first 25 residues, 1–25 (MARAGWTSPVPLCVCLLLTCGFAEA), serve as a signal peptide directing secretion. 3 N-linked (GlcNAc...) asparagine glycosylation sites follow: Asn71, Asn292, and Asn344. A helical transmembrane segment spans residues 488–504 (VIGFLLAVVLTVAFITF).

It belongs to the UDP-glycosyltransferase family. In terms of assembly, homodimer. Homooligomer. Interacts with UGT1A1, UGT1A3, UGT1A4, UGT1A6, UGT1A7, UGT1A8 and UGT1A9 to form heterodimers. Isoform 1 interacts with isoform 2/i2 suggesting that oligomerization is involved in negative regulation of transferase activity by isoform 2. Isoform 1 also interacts with respective i2 isoforms of UGT1A1, UGT1A3, UGT1A4, UGT1A6, UGT1A7, UGT1A8 and UGT1A9. As to expression, liver and colon. Isoform 1 and isoform 2 are expressed in colon, esophagus and small intestine; isoform 2 but not isoform 1 is expressed in liver or kidney.

The protein resides in the endoplasmic reticulum membrane. The catalysed reaction is glucuronate acceptor + UDP-alpha-D-glucuronate = acceptor beta-D-glucuronoside + UDP + H(+). It carries out the reaction 17beta-estradiol + UDP-alpha-D-glucuronate = 17beta-estradiol 3-O-(beta-D-glucuronate) + UDP + H(+). The enzyme catalyses 17beta-estradiol + UDP-alpha-D-glucuronate = 17beta-estradiol 17-O-(beta-D-glucuronate) + UDP + H(+). It catalyses the reaction 17alpha-estradiol + UDP-alpha-D-glucuronate = 17alpha-estradiol 3-O-(beta-D-glucuronate) + UDP + H(+). The catalysed reaction is 16alpha,17beta-estriol + UDP-alpha-D-glucuronate = 16alpha,17beta-estriol 3-O-(beta-D-glucuronate) + UDP + H(+). It carries out the reaction 16beta,17beta-estriol + UDP-alpha-D-glucuronate = 16beta,17beta-estriol 3-O-(beta-D-glucuronate) + UDP + H(+). The enzyme catalyses 16alpha,17alpha-estriol + UDP-alpha-D-glucuronate = 16alpha,17alpha-estriol 3-O-(beta-D-glucuronate) + UDP + H(+). It catalyses the reaction 16alpha-hydroxyestrone + UDP-alpha-D-glucuronate = 16alpha-hydroxyestrone 3-O-(beta-D-glucuronate) + UDP + H(+). The catalysed reaction is estrone + UDP-alpha-D-glucuronate = estrone 3-O-(beta-D-glucuronate) + UDP + H(+). It carries out the reaction prunetin + UDP-alpha-D-glucuronate = prunetin-4'-O-beta-D-glucuronide + UDP. The enzyme catalyses (5Z,8Z,11Z,14Z)-eicosatetraenoate + UDP-alpha-D-glucuronate = O-[(5Z),(8Z),(11Z),(14Z)-eicosatetraenoyl]-beta-D-glucuronate + UDP. It catalyses the reaction 15-hydroxy-(5Z,8Z,11Z,13E)-eicosatetraenoate + UDP-alpha-D-glucuronate = 15-O-(beta-D-glucuronosyl)-(5Z,8Z,11Z,14Z)-eicosatetraenoate + UDP + H(+). The catalysed reaction is prostaglandin B1 + UDP-alpha-D-glucuronate = 15-O-(beta-D-glucuronosyl)-prostaglandin B1 + UDP + H(+). It carries out the reaction (E)-ferulate + UDP-alpha-D-glucuronate = (E)-4-O-(beta-D-glucuronosyl)-ferulate + UDP + H(+). The enzyme catalyses (E)-ferulate + UDP-alpha-D-glucuronate = (E)-ferulic acid beta-D-glucuronate ester + UDP. It catalyses the reaction losartan + UDP-alpha-D-glucuronate = losartan-2-N-beta-D-glucuronide + UDP. The catalysed reaction is candesartan + UDP-alpha-D-glucuronate = candesartan O-beta-D-glucuronoside + UDP. It carries out the reaction candesartan + UDP-alpha-D-glucuronate = candesartan-2-N-beta-D-glucuronide + UDP. The enzyme catalyses zolasartan + UDP-alpha-D-glucuronate = zolarsartan-1-N-beta-D-glucuronide + UDP. UDP-glucuronosyltransferase (UGT) that catalyzes phase II biotransformation reactions in which lipophilic substrates are conjugated with glucuronic acid to increase the metabolite's water solubility, thereby facilitating excretion into either the urine or bile. Essential for the elimination and detoxification of drugs, xenobiotics and endogenous compounds. Catalyzes the glucuronidation of endogenous estrogen hormones such as estradiol, estrone and estriol. Involved in the glucuronidation of arachidonic acid (AA) and AA-derived eicosanoids including 15-HETE and PGB1. Involved in the glucuronidation of the phytochemical ferulic acid at the phenolic or the carboxylic acid group. Also catalyzes the glucuronidation of the isoflavones genistein, daidzein, glycitein, formononetin, biochanin A and prunetin, which are phytoestrogens with anticancer and cardiovascular properties. Involved in the glucuronidation of the AGTR1 angiotensin receptor antagonist losartan, caderastan and zolarsatan, drugs which can inhibit the effect of angiotensin II. Functionally, lacks UGT glucuronidation activity but acts as a negative regulator of isoform 1. This chain is UDP-glucuronosyltransferase 1A10, found in Homo sapiens (Human).